The primary structure comprises 611 residues: RAC serine/threonine-protein kinase (611 aa).

A compositionally biased stretch (low complexity) spans 14–25 (VVASAPAPGSAS). Disordered regions lie at residues 14-33 (VVASAPAPGSASRIPESPTT) and 45-88 (QSTH…NTTF). Position 30 is a phosphoserine (serine 30). Positions 106–211 (QVVKEGWLMK…WTEAIRNVSS (106 aa)) constitute a PH domain. Residues 266-523 (FEFLKVLGKG…VKEIQAHPFF (258 aa)) form the Protein kinase domain. ATP-binding positions include 272–280 (LGKGTFGKV) and lysine 295. The active-site Proton acceptor is the aspartate 389. The region spanning 524–597 (ASINWTDLVL…QGDMASTLGT (74 aa)) is the AGC-kinase C-terminal domain. A Phosphoserine modification is found at serine 586.

Belongs to the protein kinase superfamily. AGC Ser/Thr protein kinase family. RAC subfamily. In terms of assembly, interacts with trbl. Phosphorylated and activated by Pk61C/PDK1. Phosphorylated on Ser-586 by the TORC2 complex. Ubiquitously expressed. Present in ovary, where it is concentrated at the basal side of follicle cells.

It is found in the cytoplasm. The protein localises to the cytosol. Its subcellular location is the cell membrane. It catalyses the reaction L-seryl-[protein] + ATP = O-phospho-L-seryl-[protein] + ADP + H(+). The enzyme catalyses L-threonyl-[protein] + ATP = O-phospho-L-threonyl-[protein] + ADP + H(+). Its function is as follows. Serine/threonine kinase involved in various developmental processes. During early embryogenesis, acts as a survival protein. During mid-embryogenesis, phosphorylates and activates trh, a transcription factor required for tracheal cell fate determination. Also regulates tracheal cell migration. Later in development, acts downstream of PI3K and Pk61C/PDK1 in the insulin receptor transduction pathway which regulates cell growth and organ size, by phosphorylating and antagonizing FOXO transcription factor. Controls follicle cell size during oogenesis. May also stimulate cell growth by phosphorylating Gig/Tsc2 and inactivating the Tsc complex. Dephosphorylation of 'Ser-586' by Phlpp triggers apoptosis and suppression of tumor growth. The sequence is that of RAC serine/threonine-protein kinase from Drosophila melanogaster (Fruit fly).